The sequence spans 336 residues: Ornithine carbamoyltransferase, catabolic (336 aa).

Carbamoyl phosphate contacts are provided by residues 57 to 60, Q84, R108, and 136 to 139; these read STRT and HPTQ. Residues N169, D233, and 237-238 contribute to the L-ornithine site; that span reads SM. Residues 275-276 and R322 contribute to the carbamoyl phosphate site; that span reads CL.

The protein belongs to the aspartate/ornithine carbamoyltransferase superfamily. OTCase family.

The protein localises to the cytoplasm. It carries out the reaction carbamoyl phosphate + L-ornithine = L-citrulline + phosphate + H(+). It participates in amino-acid degradation; L-arginine degradation via ADI pathway; carbamoyl phosphate from L-arginine: step 2/2. Reversibly catalyzes the transfer of the carbamoyl group from carbamoyl phosphate (CP) to the N(epsilon) atom of ornithine (ORN) to produce L-citrulline. The sequence is that of Ornithine carbamoyltransferase, catabolic from Chromobacterium violaceum (strain ATCC 12472 / DSM 30191 / JCM 1249 / CCUG 213 / NBRC 12614 / NCIMB 9131 / NCTC 9757 / MK).